Consider the following 719-residue polypeptide: DNA polymerase epsilon subunit B (719 aa).

Positions 107–147 (SIPPKTKTYNNGGGKTTTIDRFLTKRPSPSDNDEGPLDQSI) are disordered.

This sequence belongs to the DNA polymerase epsilon subunit B family. In terms of assembly, heterotetramer. Consists of four subunits: POL2, DPB2, DPB3 and DPB4.

It localises to the nucleus. In terms of biological role, as accessory component of the DNA polymerase epsilon (DNA polymerase II) participates in chromosomal DNA replication. This chain is DNA polymerase epsilon subunit B (DPB2), found in Candida glabrata (strain ATCC 2001 / BCRC 20586 / JCM 3761 / NBRC 0622 / NRRL Y-65 / CBS 138) (Yeast).